The primary structure comprises 374 residues: Putative 2,3-diketo-5-methylthiopentyl-1-phosphate enolase (374 aa).

Substrate is bound by residues lysine 138, 164–167 (QDDE), histidine 255, glycine 327, and 349–350 (GG). Aspartate 166 is a Mg(2+) binding site.

This sequence belongs to the RuBisCO large chain family. Type IV subfamily. In terms of assembly, homodimer. Requires Mg(2+) as cofactor.

It carries out the reaction 5-methylsulfanyl-2,3-dioxopentyl phosphate = 2-hydroxy-5-methylsulfanyl-3-oxopent-1-enyl phosphate. It participates in amino-acid biosynthesis; L-methionine biosynthesis via salvage pathway; L-methionine from S-methyl-5-thio-alpha-D-ribose 1-phosphate: step 3/6. Catalyzes the enolization of 2,3-diketo-5-methylthiopentyl-1-phosphate (DK-MTP-1-P) into 2-hydroxy-3-keto-5-methylthiopentenyl-1-phosphate (HK-MTPenyl-1-P). This Shouchella clausii (strain KSM-K16) (Alkalihalobacillus clausii) protein is Putative 2,3-diketo-5-methylthiopentyl-1-phosphate enolase (mtnW).